The primary structure comprises 206 residues: Delta and osm-11 homolog protein 1 (206 aa).

The polypeptide is Delta and osm-11 homolog protein 1 (dos-1) (Caenorhabditis elegans).